A 287-amino-acid polypeptide reads, in one-letter code: Putative sugar uptake protein EF_0928 (287 aa).

The next 10 helical transmembrane spans lie at 5–27 (IALV…GGSA), 32–49 (LGMT…FFVI), 53–71 (LTTA…WSLG), 84–106 (VSVG…GAVF), 116–134 (FVVG…YLTA), 155–177 (IRAL…ATGL), 182–200 (IILP…FAFK), 207–229 (FVWM…LLTM), 234–256 (LAIS…IFLL), and 265–284 (MFYV…LLGY).

Belongs to the GRP transporter (TC 2.A.7.5) family.

It localises to the cell membrane. This Enterococcus faecalis (strain ATCC 700802 / V583) protein is Putative sugar uptake protein EF_0928.